The primary structure comprises 312 residues: Very-long-chain 3-oxoacyl-CoA reductase (312 aa).

Residues 4 to 24 (ALPAAGFLYWVGAGTVAYLAL) traverse the membrane as a helical segment. Position 50–79 (50–79 (GEWAVVTGSTDGIGKSYAEELAKHGMKVVL)) interacts with NADP(+). The next 2 membrane-spanning stretches (helical) occupy residues 182 to 202 (GAILNISSGSGMLPVPLLTIY) and 271 to 291 (GYLIHALMGSIISNLPSWIYL). Substrate is bound at residue Ser-189. Tyr-202 functions as the Proton acceptor in the catalytic mechanism. A Di-lysine motif motif is present at residues 308–312 (KTKKN).

It belongs to the short-chain dehydrogenases/reductases (SDR) family. 17-beta-HSD 3 subfamily. In terms of assembly, interacts with ELOVL1 and LASS2. Expressed in most tissues tested. Highly expressed in the ovary and mammary. Expressed in platelets.

It is found in the endoplasmic reticulum membrane. It carries out the reaction a very-long-chain (3R)-3-hydroxyacyl-CoA + NADP(+) = a very-long-chain 3-oxoacyl-CoA + NADPH + H(+). The enzyme catalyses 17beta-estradiol + NAD(+) = estrone + NADH + H(+). The catalysed reaction is 17beta-estradiol + NADP(+) = estrone + NADPH + H(+). It catalyses the reaction 3-oxooctadecanoyl-CoA + NADPH + H(+) = (3R)-hydroxyoctadecanoyl-CoA + NADP(+). It carries out the reaction (7Z,10Z,13Z,16Z)-3-oxodocosatetraenoyl-CoA + NADPH + H(+) = (3R)-hydroxy-(7Z,10Z,13Z,16Z)-docosatetraenoyl-CoA + NADP(+). The enzyme catalyses 3-oxo-(7Z,10Z,13Z,16Z,19Z)-docosapentaenoyl-CoA + NADPH + H(+) = (3R)-hydroxy-(7Z,10Z,13Z,16Z,19Z)-docosapentaenoyl-CoA + NADP(+). The catalysed reaction is (8Z,11Z,14Z)-3-oxoeicosatrienoyl-CoA + NADPH + H(+) = (3R)-hydroxy-(8Z,11Z,14Z)-eicosatrienoyl-CoA + NADP(+). Its pathway is lipid metabolism; fatty acid biosynthesis. The protein operates within steroid biosynthesis; estrogen biosynthesis. In terms of biological role, catalyzes the second of the four reactions of the long-chain fatty acids elongation cycle. This endoplasmic reticulum-bound enzymatic process, allows the addition of two carbons to the chain of long- and very long-chain fatty acids/VLCFAs per cycle. This enzyme has a 3-ketoacyl-CoA reductase activity, reducing 3-ketoacyl-CoA to 3-hydroxyacyl-CoA, within each cycle of fatty acid elongation. Thereby, it may participate in the production of VLCFAs of different chain lengths that are involved in multiple biological processes as precursors of membrane lipids and lipid mediators. May also catalyze the transformation of estrone (E1) into estradiol (E2) and play a role in estrogen formation. This is Very-long-chain 3-oxoacyl-CoA reductase from Homo sapiens (Human).